A 1171-amino-acid polypeptide reads, in one-letter code: DNA-directed RNA polymerase subunit beta (1171 aa).

Belongs to the RNA polymerase beta chain family. In terms of assembly, the RNAP catalytic core consists of 2 alpha, 1 beta, 1 beta' and 1 omega subunit. When a sigma factor is associated with the core the holoenzyme is formed, which can initiate transcription.

It carries out the reaction RNA(n) + a ribonucleoside 5'-triphosphate = RNA(n+1) + diphosphate. Its function is as follows. DNA-dependent RNA polymerase catalyzes the transcription of DNA into RNA using the four ribonucleoside triphosphates as substrates. This Corynebacterium efficiens (strain DSM 44549 / YS-314 / AJ 12310 / JCM 11189 / NBRC 100395) protein is DNA-directed RNA polymerase subunit beta.